The primary structure comprises 514 residues: Glutathione-binding protein GsiB (514 aa).

The first 26 residues, 1-26 (MARAVHRSGLVALGIATALMASCAFA), serve as a signal peptide directing secretion.

The protein belongs to the bacterial solute-binding protein 5 family. As to quaternary structure, the complex is composed of two ATP-binding proteins (GsiA), two transmembrane proteins (GsiC and GsiD) and a solute-binding protein (GsiB).

It is found in the periplasm. Its function is as follows. Part of the ABC transporter complex GsiABCD involved in glutathione import. Binds glutathione. The chain is Glutathione-binding protein GsiB from Shigella flexneri serotype 5b (strain 8401).